Reading from the N-terminus, the 506-residue chain is Galactose/methyl galactoside import ATP-binding protein MglA (506 aa).

2 consecutive ABC transporter domains span residues 14–249 (LEMR…VGRS) and 259–506 (NKPG…SLHL). Residue 46-53 (GENGAGKS) participates in ATP binding.

It belongs to the ABC transporter superfamily. Galactose/methyl galactoside importer (TC 3.A.1.2.3) family. As to quaternary structure, the complex is composed of one ATP-binding protein (MglA), two transmembrane proteins (MglC) and a solute-binding protein (MglB).

The protein resides in the cell inner membrane. It catalyses the reaction D-galactose(out) + ATP + H2O = D-galactose(in) + ADP + phosphate + H(+). The catalysed reaction is methyl beta-D-galactoside(out) + ATP + H2O = methyl beta-D-galactoside(in) + ADP + phosphate + H(+). Stimulated 3-fold by galactose and inhibited by vanadate, N-ethylmaleimide, and 5-methoxyindole-2-carboxylic acid. In terms of biological role, part of the ABC transporter complex MglABC involved in galactose/methyl galactoside import. Responsible for energy coupling to the transport system. The chain is Galactose/methyl galactoside import ATP-binding protein MglA from Salmonella typhimurium (strain LT2 / SGSC1412 / ATCC 700720).